The chain runs to 567 residues: Dihydroxy-acid dehydratase (567 aa).

C52 lines the [2Fe-2S] cluster pocket. D84 is a Mg(2+) binding site. C125 contacts [2Fe-2S] cluster. Mg(2+)-binding residues include D126 and K127. The residue at position 127 (K127) is an N6-carboxylysine. C197 is a [2Fe-2S] cluster binding site. E448 contacts Mg(2+). The active-site Proton acceptor is the S474.

It belongs to the IlvD/Edd family. In terms of assembly, homodimer. [2Fe-2S] cluster serves as cofactor. The cofactor is Mg(2+).

The enzyme catalyses (2R)-2,3-dihydroxy-3-methylbutanoate = 3-methyl-2-oxobutanoate + H2O. It carries out the reaction (2R,3R)-2,3-dihydroxy-3-methylpentanoate = (S)-3-methyl-2-oxopentanoate + H2O. It functions in the pathway amino-acid biosynthesis; L-isoleucine biosynthesis; L-isoleucine from 2-oxobutanoate: step 3/4. The protein operates within amino-acid biosynthesis; L-valine biosynthesis; L-valine from pyruvate: step 3/4. In terms of biological role, functions in the biosynthesis of branched-chain amino acids. Catalyzes the dehydration of (2R,3R)-2,3-dihydroxy-3-methylpentanoate (2,3-dihydroxy-3-methylvalerate) into 2-oxo-3-methylpentanoate (2-oxo-3-methylvalerate) and of (2R)-2,3-dihydroxy-3-methylbutanoate (2,3-dihydroxyisovalerate) into 2-oxo-3-methylbutanoate (2-oxoisovalerate), the penultimate precursor to L-isoleucine and L-valine, respectively. The chain is Dihydroxy-acid dehydratase from Streptococcus pneumoniae (strain CGSP14).